We begin with the raw amino-acid sequence, 436 residues long: Magnesium transporter MRS2-4 (436 aa).

Positions 1–56 (MGKGPLSFRRLSSIRHRKKGSAVKDDSAQTSTPSSPPPPLPIHAGGSAVGATGKAK) are disordered. Positions 12-21 (SSIRHRKKGS) are enriched in basic residues. Low complexity predominate over residues 44–53 (AGGSAVGATG). Helical transmembrane passes span 372-392 (LTLT…SLFG) and 405-425 (VFGY…MVTL). A Required for magnesium transport activity motif is present at residues 392 to 394 (GMN).

The protein belongs to the CorA metal ion transporter (MIT) (TC 1.A.35.5) family. Expressed in the whole plant except roots.

It localises to the membrane. Its function is as follows. Magnesium transporter that may mediate the influx of magnesium. The chain is Magnesium transporter MRS2-4 (MRS2-4) from Arabidopsis thaliana (Mouse-ear cress).